The sequence spans 312 residues: Acetyl-coenzyme A carboxylase carboxyl transferase subunit beta (312 aa).

A CoA carboxyltransferase N-terminal domain is found at 24–293 (LWIKCPDSGQ…PHADEVAAPP (270 aa)). Residues 286–312 (ADEVAAPPPPDVEGPPPAAEPVALPPA) form a disordered region. Positions 291 to 312 (APPPPDVEGPPPAAEPVALPPA) are enriched in pro residues.

Belongs to the AccD/PCCB family. Acetyl-CoA carboxylase is a heterohexamer composed of biotin carboxyl carrier protein (AccB), biotin carboxylase (AccC) and two subunits each of ACCase subunit alpha (AccA) and ACCase subunit beta (AccD).

Its subcellular location is the cytoplasm. It catalyses the reaction N(6)-carboxybiotinyl-L-lysyl-[protein] + acetyl-CoA = N(6)-biotinyl-L-lysyl-[protein] + malonyl-CoA. Its pathway is lipid metabolism; malonyl-CoA biosynthesis; malonyl-CoA from acetyl-CoA: step 1/1. Its function is as follows. Component of the acetyl coenzyme A carboxylase (ACC) complex. Biotin carboxylase (BC) catalyzes the carboxylation of biotin on its carrier protein (BCCP) and then the CO(2) group is transferred by the transcarboxylase to acetyl-CoA to form malonyl-CoA. The sequence is that of Acetyl-coenzyme A carboxylase carboxyl transferase subunit beta from Afipia carboxidovorans (strain ATCC 49405 / DSM 1227 / KCTC 32145 / OM5) (Oligotropha carboxidovorans).